A 170-amino-acid chain; its full sequence is Sec-independent protein translocase protein TATA, chloroplastic (170 aa).

The N-terminal 61 residues, 1 to 61 (MGIPVVVPVA…GGSGGDLAAV (61 aa)), are a transit peptide targeting the chloroplast. Residues 62 to 84 (AASVAARPRRAGSGGGGALGCKC) lie on the Lumenal side of the membrane. The chain crosses the membrane as a helical span at residues 85-105 (LFGLGVPELAVIAGVAALVFG). Topologically, residues 106–170 (PKQLPEIGRS…LEASSSKESA (65 aa)) are stromal. A compositionally biased stretch (basic and acidic residues) spans 130–139 (FETELKKEPG). The interval 130–170 (FETELKKEPGEGGDQPPPATPTAVSGGEEKGLEASSSKESA) is disordered.

It belongs to the TatA/E family. As to quaternary structure, in thylakoid membranes, TATC and TATB form a large receptor complex, containing about eight TATC-TATB pairs, which binds the precursor protein. Twin arginine signal peptide promotes pH-triggered docking of TATA oligomers to TATC-TATB receptor complex, inducing a conformational switch of TATA that results in activation of the translocase. TATA dissociates from TATC-TATB upon completion of translocation.

The protein resides in the plastid. The protein localises to the chloroplast thylakoid membrane. Its function is as follows. Part of the twin-arginine translocation (Tat) system that transports large folded proteins containing a characteristic twin-arginine motif in their signal peptide across the thylakoid membrane. Involved in delta pH-dependent protein transport required for chloroplast development, especially thylakoid membrane formation. TATC and TATB mediate precursor recognition, whereas TATA facilitates translocation. This chain is Sec-independent protein translocase protein TATA, chloroplastic, found in Zea mays (Maize).